Consider the following 254-residue polypeptide: Acidic endochitinase (254 aa).

The N-terminal stretch at 1 to 23 (MKFWGSVLALSFVVFLFLTGTLA) is a signal peptide. The Proton donor role is filled by Glu91. A disulfide bond links Cys213 and Cys245.

Belongs to the glycosyl hydrolase 19 family. Chitinase class II subfamily.

Its subcellular location is the secreted. The enzyme catalyses Random endo-hydrolysis of N-acetyl-beta-D-glucosaminide (1-&gt;4)-beta-linkages in chitin and chitodextrins.. Defense against chitin-containing fungal pathogens. This chain is Acidic endochitinase, found in Petunia hybrida (Petunia).